We begin with the raw amino-acid sequence, 807 residues long: Ribosomal RNA large subunit methyltransferase K/L (807 aa).

The THUMP domain occupies 67-182 (QIYKICLWSR…EKQAEIFLDL (116 aa)). Over residues 548–560 (NTQYGNPEASAQS) the composition is skewed to polar residues. Residues 548–602 (NTQYGNPEASAQSKESKNAPEPKKDNRNRYKGNKFQQAREEAKRQEAQRLAQKKR) are disordered. Composition is skewed to basic and acidic residues over residues 561–575 (KESKNAPEPKKDNRN) and 584–594 (QAREEAKRQEA).

This sequence belongs to the methyltransferase superfamily. RlmKL family.

It localises to the cytoplasm. The enzyme catalyses guanosine(2445) in 23S rRNA + S-adenosyl-L-methionine = N(2)-methylguanosine(2445) in 23S rRNA + S-adenosyl-L-homocysteine + H(+). It catalyses the reaction guanosine(2069) in 23S rRNA + S-adenosyl-L-methionine = N(2)-methylguanosine(2069) in 23S rRNA + S-adenosyl-L-homocysteine + H(+). In terms of biological role, specifically methylates the guanine in position 2445 (m2G2445) and the guanine in position 2069 (m7G2069) of 23S rRNA. The chain is Ribosomal RNA large subunit methyltransferase K/L from Psychrobacter sp. (strain PRwf-1).